The chain runs to 514 residues: Bifunctional lysine-specific demethylase and histidyl-hydroxylase NO66 (514 aa).

A disordered region spans residues 1–53; the sequence is MKRGLEEEIEEMSEEEVGVNNNNNGKKKKKKVVKKSKPVPLTKSVPQVSSQPL. Residues 7-17 show a composition bias toward acidic residues; it reads EEIEEMSEEEV. Positions 25–37 are enriched in basic residues; it reads GKKKKKKVVKKSK. The span at 44–53 shows a compositional bias: polar residues; the sequence is SVPQVSSQPL. In terms of domain architecture, JmjC spans 180–327; the sequence is CSVRLLNPQT…IGKVLNRALE (148 aa). Residues His226, Asp228, and His291 each coordinate Fe cation.

It belongs to the ROX family. NO66 subfamily. Fe(2+) serves as cofactor.

It is found in the nucleus. The enzyme catalyses N(6),N(6)-dimethyl-L-lysyl(36)-[histone H3] + 2 2-oxoglutarate + 2 O2 = L-lysyl(36)-[histone H3] + 2 formaldehyde + 2 succinate + 2 CO2. Oxygenase that can act as both a histone lysine demethylase and a ribosomal histidine hydroxylase. Specifically demethylates 'Lys-4' (H3K4me) and 'Lys-36' (H3K36me) of histone H3, thereby playing a central role in histone code. This Dictyostelium discoideum (Social amoeba) protein is Bifunctional lysine-specific demethylase and histidyl-hydroxylase NO66 (jcdg).